The chain runs to 476 residues: ATP synthase subunit beta (476 aa).

154 to 161 (GGAGVGKT) is an ATP binding site.

It belongs to the ATPase alpha/beta chains family. As to quaternary structure, F-type ATPases have 2 components, CF(1) - the catalytic core - and CF(0) - the membrane proton channel. CF(1) has five subunits: alpha(3), beta(3), gamma(1), delta(1), epsilon(1). CF(0) has four main subunits: a(1), b(1), b'(1) and c(9-12).

It is found in the cell inner membrane. It catalyses the reaction ATP + H2O + 4 H(+)(in) = ADP + phosphate + 5 H(+)(out). Its function is as follows. Produces ATP from ADP in the presence of a proton gradient across the membrane. The catalytic sites are hosted primarily by the beta subunits. In Rhodopseudomonas palustris (strain HaA2), this protein is ATP synthase subunit beta.